A 457-amino-acid chain; its full sequence is ADP-dependent glucose/glucosamine kinase (457 aa).

The region spanning 5-457 (TNWESLYEKA…SAFVSEFSLH (453 aa)) is the ADPK domain. Residues aspartate 37, glutamate 91, 115–116 (GQ), and histidine 179 contribute to the D-glucose site. Mg(2+) is bound at residue glutamate 269. ADP is bound at residue asparagine 295. Glutamate 298 is a Mg(2+) binding site. ADP is bound by residues 345–346 (HT), valine 432, and glycine 442. Aspartate 443 provides a ligand contact to D-glucose. Aspartate 443 is a binding site for Mg(2+). The active-site Proton acceptor is aspartate 443.

The protein belongs to the ADP-dependent glucokinase family. Mg(2+) is required as a cofactor.

Its subcellular location is the cytoplasm. The enzyme catalyses D-glucose + ADP = D-glucose 6-phosphate + AMP + H(+). It catalyses the reaction D-glucosamine + ADP = D-glucosamine 6-phosphate + AMP + H(+). It participates in carbohydrate degradation; glycolysis. With respect to regulation, inhibited by 8-bromoadenosine phosphate (8-Br-AMP). Functionally, catalyzes the ADP-dependent phosphorylation of D-glucose to D-glucose 6-phosphate and glucosamine to glucosamine 6-phosphate. In Pyrococcus horikoshii (strain ATCC 700860 / DSM 12428 / JCM 9974 / NBRC 100139 / OT-3), this protein is ADP-dependent glucose/glucosamine kinase.